The following is a 461-amino-acid chain: Cysteine--tRNA ligase (461 aa).

Cysteine 29 lines the Zn(2+) pocket. Positions 31 to 41 match the 'HIGH' region motif; that stretch reads MTIYDLCHVGH. Zn(2+) contacts are provided by cysteine 213, histidine 238, and glutamate 242. The 'KMSKS' region motif lies at 274–278; the sequence is KMSKS. ATP is bound at residue lysine 277.

This sequence belongs to the class-I aminoacyl-tRNA synthetase family. Monomer. Requires Zn(2+) as cofactor.

It localises to the cytoplasm. It catalyses the reaction tRNA(Cys) + L-cysteine + ATP = L-cysteinyl-tRNA(Cys) + AMP + diphosphate. This is Cysteine--tRNA ligase from Methylibium petroleiphilum (strain ATCC BAA-1232 / LMG 22953 / PM1).